Here is a 75-residue protein sequence, read N- to C-terminus: Small ribosomal subunit protein eS28 (75 aa).

This sequence belongs to the eukaryotic ribosomal protein eS28 family.

The chain is Small ribosomal subunit protein eS28 from Natronomonas pharaonis (strain ATCC 35678 / DSM 2160 / CIP 103997 / JCM 8858 / NBRC 14720 / NCIMB 2260 / Gabara) (Halobacterium pharaonis).